Reading from the N-terminus, the 68-residue chain is Protein SlyX homolog (68 aa).

This sequence belongs to the SlyX family.

This is Protein SlyX homolog from Pseudomonas putida (strain GB-1).